Consider the following 545-residue polypeptide: MPMDTETKQSGDLIFRSKLPDIYIPKHLPLHSYCFENLSEFNSRPCLIDGANDRIYTYAEVELTSRKVAVGLNKLGIQQKDTIMILLPNCPEFVFAFIGASYLGAISTMANPLFTPAEVVKQAKASSAKIVITQACFAGKVKDYAIENDLKVICVDSVPEGCVHFSELIQSDEHEIPDVKIQPDDVVALPYSSGTTGLPKGVMLTHKGLVTSVAQQVDGENANLYMHSDDVLMCVLPLFHIYSLNSVLLCALRVGAAILIMQKFDIAQFLELIPKHKVTIGPFVPPIVLAIAKSPLVDNYDLSSVRTVMSGAAPLGKELEDAVRAKFPNAKLGQGYGMTEAGPVLAMCLAFAKEPFDIKSGACGTVVRNAEMKIVDPDTGCSLPRNQPGEICIRGDQIMKGYLNDPEATARTIEKEGWLHTGDIGFIDDDDELFIVDRLKELIKYKGFQVAPAELEALLINHPDISDAAVVPMIDEQAGEVPVAFVVRSNGSTITEDEVKDFISKQVIFYKRIKRVFFVETVPKSPSGKILRKDLRARLAAGISN.

6 residues coordinate ATP: Ser192, Ser193, Gly194, Thr195, Thr196, and Lys200. Residues Tyr242 and Ser246 each coordinate (E)-4-coumaroyl-AMP. Lys263 provides a ligand contact to CoA. Positions 265-334 (DIAQFLELIP…AKFPNAKLGQ (70 aa)) are SBD1. (E)-4-coumaroyl-AMP-binding residues include Ala312, Gln334, Gly335, Thr339, and Met347. ATP-binding residues include Gln334, Gly335, and Thr339. An SBD2 region spans residues 335–402 (GYGMTEAGPV…IRGDQIMKGY (68 aa)). Positions 423 and 438 each coordinate ATP. (E)-4-coumaroyl-AMP-binding residues include Lys440 and Lys444. Residues Lys446 and Gly447 each contribute to the CoA site. Position 529 (Lys529) interacts with ATP.

This sequence belongs to the ATP-dependent AMP-binding enzyme family. Mg(2+) serves as cofactor.

It catalyses the reaction (E)-4-coumarate + ATP + CoA = (E)-4-coumaroyl-CoA + AMP + diphosphate. The catalysed reaction is (E)-4-coumarate + ATP + H(+) = (E)-4-coumaroyl-AMP + diphosphate. It carries out the reaction (E)-4-coumaroyl-AMP + CoA = (E)-4-coumaroyl-CoA + AMP + H(+). It functions in the pathway phytoalexin biosynthesis; 3,4',5-trihydroxystilbene biosynthesis; 3,4',5-trihydroxystilbene from trans-4-coumarate: step 1/2. Functionally, carboxylate--CoA ligase that may use 4-coumarate as substrate. Follows a two-step reaction mechanism, wherein the carboxylate substrate first undergoes adenylation by ATP, followed by a thioesterification in the presence of CoA to yield the final CoA thioester. This is 4-coumarate--CoA ligase 1 (4CL1) from Solanum tuberosum (Potato).